A 309-amino-acid polypeptide reads, in one-letter code: tRNA uridine(34) hydroxylase (309 aa).

Positions 130–224 (SDPDTIVIDT…YLEEVPQEES (95 aa)) constitute a Rhodanese domain. Residue C184 is the Cysteine persulfide intermediate of the active site.

It belongs to the TrhO family.

The catalysed reaction is uridine(34) in tRNA + AH2 + O2 = 5-hydroxyuridine(34) in tRNA + A + H2O. Its function is as follows. Catalyzes oxygen-dependent 5-hydroxyuridine (ho5U) modification at position 34 in tRNAs. The sequence is that of tRNA uridine(34) hydroxylase from Rhizobium etli (strain ATCC 51251 / DSM 11541 / JCM 21823 / NBRC 15573 / CFN 42).